Reading from the N-terminus, the 445-residue chain is Phosphoglucosamine mutase (445 aa).

The Phosphoserine intermediate role is filled by S102. S102, D241, D243, and D245 together coordinate Mg(2+). S102 carries the phosphoserine modification.

Belongs to the phosphohexose mutase family. It depends on Mg(2+) as a cofactor. Activated by phosphorylation.

The catalysed reaction is alpha-D-glucosamine 1-phosphate = D-glucosamine 6-phosphate. In terms of biological role, catalyzes the conversion of glucosamine-6-phosphate to glucosamine-1-phosphate. This is Phosphoglucosamine mutase from Shigella boydii serotype 4 (strain Sb227).